The chain runs to 246 residues: Acetoacetate decarboxylase (246 aa).

Catalysis depends on Lys-116, which acts as the Schiff-base intermediate with acetoacetate.

Belongs to the ADC family.

It carries out the reaction acetoacetate + H(+) = acetone + CO2. In terms of biological role, catalyzes the conversion of acetoacetate to acetone and carbon dioxide. The protein is Acetoacetate decarboxylase of Burkholderia multivorans (strain ATCC 17616 / 249).